We begin with the raw amino-acid sequence, 510 residues long: GPI mannosyltransferase 4 (510 aa).

3 consecutive transmembrane segments (helical) span residues leucine 7–histidine 27, phenylalanine 62–glycine 82, and alanine 89–leucine 109. Residue asparagine 142 is glycosylated (N-linked (GlcNAc...) asparagine). The chain crosses the membrane as a helical span at residues leucine 179–valine 199. N-linked (GlcNAc...) asparagine glycosylation is present at asparagine 212. A run of 3 helical transmembrane segments spans residues isoleucine 213–valine 233, leucine 268–threonine 288, and phenylalanine 339–glycine 359.

The protein belongs to the glycosyltransferase 22 family. PIGZ subfamily.

The protein resides in the endoplasmic reticulum membrane. It participates in glycolipid biosynthesis; glycosylphosphatidylinositol-anchor biosynthesis. In terms of biological role, alpha-1,2-mannosyltransferase involved in glycosylphosphatidylinositol-anchor biosynthesis. Transfers a fourth mannose to trimannosyl-GPIs during GPI precursor assembly. The presence of a fourth mannose in GPI is essential in fungi. The protein is GPI mannosyltransferase 4 (SMP3) of Yarrowia lipolytica (strain CLIB 122 / E 150) (Yeast).